Consider the following 267-residue polypeptide: Thiamine thiazole synthase (267 aa).

Residues serine 41, 60–61 (ER), glycine 68, valine 132, and 160–162 (HVD) contribute to the NAD(+) site. Residues aspartate 162 and histidine 177 each coordinate Fe cation. NAD(+) is bound at residue methionine 227. Residue arginine 237 coordinates glycine.

Belongs to the THI4 family. Homooctamer; tetramer of dimers. Fe(2+) is required as a cofactor.

It catalyses the reaction hydrogen sulfide + glycine + NAD(+) = ADP-5-ethyl-4-methylthiazole-2-carboxylate + nicotinamide + 3 H2O + H(+). It functions in the pathway cofactor biosynthesis; thiamine diphosphate biosynthesis. Functionally, involved in the biosynthesis of the thiazole moiety of thiamine. Catalyzes the conversion of NAD and glycine to adenosine diphosphate 5-(2-hydroxyethyl)-4-methylthiazole-2-carboxylate (ADT), an adenylated thiazole intermediate, using free sulfide as a source of sulfur. This chain is Thiamine thiazole synthase, found in Saccharolobus islandicus (strain M.14.25 / Kamchatka #1) (Sulfolobus islandicus).